A 118-amino-acid chain; its full sequence is MARIAGINIPDQKHTVIALTAIFGIGKTRSQAICVAAGIAEHVKISELSEEQIEKLRDEVAKYVVEGDLRREVTLSIKRLMDLGTYRGLRHRRGLPVRGQRTKTNARTRKGPRKPIKK.

The disordered stretch occupies residues 92-118 (RRGLPVRGQRTKTNARTRKGPRKPIKK).

It belongs to the universal ribosomal protein uS13 family. Part of the 30S ribosomal subunit. Forms a loose heterodimer with protein S19. Forms two bridges to the 50S subunit in the 70S ribosome.

Functionally, located at the top of the head of the 30S subunit, it contacts several helices of the 16S rRNA. In the 70S ribosome it contacts the 23S rRNA (bridge B1a) and protein L5 of the 50S subunit (bridge B1b), connecting the 2 subunits; these bridges are implicated in subunit movement. Contacts the tRNAs in the A and P-sites. In Yersinia pestis, this protein is Small ribosomal subunit protein uS13.